Here is a 325-residue protein sequence, read N- to C-terminus: Undecaprenyl-phosphate 4-deoxy-4-formamido-L-arabinose transferase (325 aa).

The next 2 membrane-spanning stretches (helical) occupy residues 236-256 (LSIF…LLIL) and 270-290 (VFTL…GMGL).

The protein belongs to the glycosyltransferase 2 family.

The protein localises to the cell inner membrane. It carries out the reaction UDP-4-deoxy-4-formamido-beta-L-arabinose + di-trans,octa-cis-undecaprenyl phosphate = 4-deoxy-4-formamido-alpha-L-arabinopyranosyl di-trans,octa-cis-undecaprenyl phosphate + UDP. It participates in glycolipid biosynthesis; 4-amino-4-deoxy-alpha-L-arabinose undecaprenyl phosphate biosynthesis; 4-amino-4-deoxy-alpha-L-arabinose undecaprenyl phosphate from UDP-4-deoxy-4-formamido-beta-L-arabinose and undecaprenyl phosphate: step 1/2. It functions in the pathway bacterial outer membrane biogenesis; lipopolysaccharide biosynthesis. Its function is as follows. Catalyzes the transfer of 4-deoxy-4-formamido-L-arabinose from UDP to undecaprenyl phosphate. The modified arabinose is attached to lipid A and is required for resistance to polymyxin and cationic antimicrobial peptides. The polypeptide is Undecaprenyl-phosphate 4-deoxy-4-formamido-L-arabinose transferase (Edwardsiella ictaluri (strain 93-146)).